The primary structure comprises 501 residues: Aldehyde dehydrogenase 1A1 (501 aa).

N-acetylserine is present on Ser2. Lys91 and Lys128 each carry N6-acetyllysine. NAD(+)-binding positions include 167–170, 193–196, 226–227, and 246–247; these read IPWN, KPAE, GP, and GS. An N6-acetyllysine modification is found at Lys252. Catalysis depends on Glu269, which acts as the Proton acceptor. 269-271 serves as a coordination point for NAD(+); it reads ELG. Catalysis depends on Cys303, which acts as the Nucleophile. Residues 336 to 501 form a mediates interaction with PRMT3 region; the sequence is LTQGINQGPQ…VAMKISQKNS (166 aa). The residue at position 337 (Thr337) is a Phosphothreonine. NAD(+) is bound at residue 349 to 353; that stretch reads EQHDK. 2 positions are modified to N6-acetyllysine: Lys353 and Lys367. Residue 400–402 participates in NAD(+) binding; it reads EIF. Lys410 carries the N6-acetyllysine modification. The residue at position 413 (Ser413) is a Phosphoserine. Lys419, Lys435, and Lys495 each carry N6-acetyllysine.

This sequence belongs to the aldehyde dehydrogenase family. Homotetramer. Interacts with PRMT3; the interaction is direct, inhibits ALDH1A1 aldehyde dehydrogenase activity and is independent of the methyltransferase activity of PRMT3. Post-translationally, the N-terminus is blocked most probably by acetylation. Strongly expressed in kidney, lung, testis, intestine, stomach, and trachea, but weakly in the liver.

The protein localises to the cytoplasm. It is found in the cytosol. Its subcellular location is the cell projection. It localises to the axon. It carries out the reaction an aldehyde + NAD(+) + H2O = a carboxylate + NADH + 2 H(+). The catalysed reaction is all-trans-retinal + NAD(+) + H2O = all-trans-retinoate + NADH + 2 H(+). The enzyme catalyses 9-cis-retinal + NAD(+) + H2O = 9-cis-retinoate + NADH + 2 H(+). It catalyses the reaction 11-cis-retinal + NAD(+) + H2O = 11-cis-retinoate + NADH + 2 H(+). It carries out the reaction 13-cis-retinal + NAD(+) + H2O = 13-cis-retinoate + NADH + 2 H(+). The catalysed reaction is 3-deoxyglucosone + NAD(+) + H2O = 2-dehydro-3-deoxy-D-gluconate + NADH + 2 H(+). The enzyme catalyses (E)-4-hydroxynon-2-enal + NAD(+) + H2O = (E)-4-hydroxynon-2-enoate + NADH + 2 H(+). It catalyses the reaction malonaldehyde + NAD(+) + H2O = 3-oxopropanoate + NADH + 2 H(+). It carries out the reaction hexanal + NAD(+) + H2O = hexanoate + NADH + 2 H(+). The catalysed reaction is propanal + NAD(+) + H2O = propanoate + NADH + 2 H(+). The enzyme catalyses acetaldehyde + NAD(+) + H2O = acetate + NADH + 2 H(+). It catalyses the reaction benzaldehyde + NAD(+) + H2O = benzoate + NADH + 2 H(+). It carries out the reaction 4-aminobutanal + NAD(+) + H2O = 4-aminobutanoate + NADH + 2 H(+). It functions in the pathway cofactor metabolism; retinol metabolism. Its activity is regulated as follows. Inhibited by chloral hydrate. Its function is as follows. Cytosolic dehydrogenase that catalyzes the irreversible oxidation of a wide range of aldehydes to their corresponding carboxylic acid. Functions downstream of retinol dehydrogenases and catalyzes the oxidation of retinaldehyde into retinoic acid, the second step in the oxidation of retinol/vitamin A into retinoic acid. This pathway is crucial to control the levels of retinol and retinoic acid, two important molecules which excess can be teratogenic and cytotoxic. Also oxidizes aldehydes resulting from lipid peroxidation like (E)-4-hydroxynon-2-enal/HNE, malonaldehyde and hexanal that form protein adducts and are highly cytotoxic. By participating for instance to the clearance of (E)-4-hydroxynon-2-enal/HNE in the lens epithelium prevents the formation of HNE-protein adducts and lens opacification. Functions also downstream of fructosamine-3-kinase in the fructosamine degradation pathway by catalyzing the oxidation of 3-deoxyglucosone, the carbohydrate product of fructosamine 3-phosphate decomposition, which is itself a potent glycating agent that may react with lysine and arginine side-chains of proteins. Also has an aminobutyraldehyde dehydrogenase activity and is probably part of an alternative pathway for the biosynthesis of GABA/4-aminobutanoate in midbrain, thereby playing a role in GABAergic synaptic transmission. The protein is Aldehyde dehydrogenase 1A1 of Rattus norvegicus (Rat).